The chain runs to 224 residues: ATP-dependent dethiobiotin synthetase BioD (224 aa).

Gly-14–Val-19 contributes to the ATP binding site. Residue Thr-18 coordinates Mg(2+). Residue Lys-39 is part of the active site. Position 43 (Ser-43) interacts with substrate. ATP is bound by residues Asp-56, Glu-117–Gly-120, and Asn-177–Glu-178. Mg(2+)-binding residues include Asp-56 and Glu-117.

The protein belongs to the dethiobiotin synthetase family. In terms of assembly, homodimer. The cofactor is Mg(2+).

Its subcellular location is the cytoplasm. The catalysed reaction is (7R,8S)-7,8-diammoniononanoate + CO2 + ATP = (4R,5S)-dethiobiotin + ADP + phosphate + 3 H(+). The protein operates within cofactor biosynthesis; biotin biosynthesis; biotin from 7,8-diaminononanoate: step 1/2. Functionally, catalyzes a mechanistically unusual reaction, the ATP-dependent insertion of CO2 between the N7 and N8 nitrogen atoms of 7,8-diaminopelargonic acid (DAPA, also called 7,8-diammoniononanoate) to form a ureido ring. In Xanthomonas campestris pv. campestris (strain ATCC 33913 / DSM 3586 / NCPPB 528 / LMG 568 / P 25), this protein is ATP-dependent dethiobiotin synthetase BioD.